The chain runs to 37 residues: Mating pheromone Er-22 (37 aa).

3 disulfide bridges follow: C3-C18, C10-C32, and C15-C24.

It is found in the secreted. Functionally, mating ciliate pheromones (or gamones) are diffusible extracellular communication signals that distinguish different intraspecific classes of cells commonly referred to as 'mating types'. They prepare the latter for conjugation by changing their cell surface properties. This is Mating pheromone Er-22 (MAT22) from Euplotes raikovi.